The chain runs to 307 residues: Protoheme IX farnesyltransferase (307 aa).

A run of 8 helical transmembrane segments spans residues 38–58 (NTLT…LSVL), 65–85 (FFTI…NNYI), 108–128 (PGFA…FLLL), 131–151 (PMAV…YSLW), 158–178 (LNTV…WAAI), 186–206 (IAWM…LALA), 251–271 (LGIT…VLGF), and 287–307 (FVYS…VTFF).

This sequence belongs to the UbiA prenyltransferase family. Protoheme IX farnesyltransferase subfamily. As to quaternary structure, interacts with CtaA.

Its subcellular location is the cell membrane. The enzyme catalyses heme b + (2E,6E)-farnesyl diphosphate + H2O = Fe(II)-heme o + diphosphate. The protein operates within porphyrin-containing compound metabolism; heme O biosynthesis; heme O from protoheme: step 1/1. Its function is as follows. Converts heme B (protoheme IX) to heme O by substitution of the vinyl group on carbon 2 of heme B porphyrin ring with a hydroxyethyl farnesyl side group. The sequence is that of Protoheme IX farnesyltransferase from Bacillus thuringiensis (strain Al Hakam).